A 194-amino-acid polypeptide reads, in one-letter code: Mersacidin decarboxylase (194 aa).

The active site involves His-75.

Belongs to the HFCD (homooligomeric flavin containing Cys decarboxylase) superfamily. In terms of assembly, homododecamer. Requires FAD as cofactor.

It functions in the pathway antibiotic biosynthesis; mersacidin biosynthesis. In terms of biological role, catalyzes the oxidative decarboxylation of the C-terminal cysteine residue of mersacidin to an aminoenethiol residue. The chain is Mersacidin decarboxylase (mrsD) from Bacillus sp. (strain HIL-Y85/54728).